The following is a 154-amino-acid chain: Ribosome maturation factor RimP (154 aa).

The protein belongs to the RimP family.

Its subcellular location is the cytoplasm. Required for maturation of 30S ribosomal subunits. The protein is Ribosome maturation factor RimP of Carboxydothermus hydrogenoformans (strain ATCC BAA-161 / DSM 6008 / Z-2901).